A 201-amino-acid polypeptide reads, in one-letter code: MSSKLRVGVAGPVGSGKTALVETLCIALKKRYKIAVVTNDIYTKEDANFLIKKKILEEGRIVGVETGGCPHTAIREDCSLNKNAVMDLENKYDPLDFIFVESGGDNLAASFSPELVDLSIYVIDVSAGDKIPRKGGPGITRSDLLLINKIDLADMVGANLNIMQNDTNMMRDGKPWFFTNLSSGSGVDNVIKYLVAQIPNI.

Residue 11 to 18 (GPVGSGKT) coordinates GTP.

Belongs to the SIMIBI class G3E GTPase family. UreG subfamily. In terms of assembly, homodimer. UreD, UreF and UreG form a complex that acts as a GTP-hydrolysis-dependent molecular chaperone, activating the urease apoprotein by helping to assemble the nickel containing metallocenter of UreC. The UreE protein probably delivers the nickel.

It is found in the cytoplasm. Its function is as follows. Facilitates the functional incorporation of the urease nickel metallocenter. This process requires GTP hydrolysis, probably effectuated by UreG. The chain is Urease accessory protein UreG from Prochlorococcus marinus subsp. pastoris (strain CCMP1986 / NIES-2087 / MED4).